The sequence spans 182 residues: ATP synthase subunit b, chloroplastic (182 aa).

The helical transmembrane segment at 33-51 (VLNIAILLSGVIYLGRNFL) threads the bilayer.

This sequence belongs to the ATPase B chain family. As to quaternary structure, F-type ATPases have 2 components, F(1) - the catalytic core - and F(0) - the membrane proton channel. F(1) has five subunits: alpha(3), beta(3), gamma(1), delta(1), epsilon(1). F(0) has four main subunits: a(1), b(1), b'(1) and c(10-14). The alpha and beta chains form an alternating ring which encloses part of the gamma chain. F(1) is attached to F(0) by a central stalk formed by the gamma and epsilon chains, while a peripheral stalk is formed by the delta, b and b' chains.

It localises to the plastid. It is found in the chloroplast thylakoid membrane. Its function is as follows. F(1)F(0) ATP synthase produces ATP from ADP in the presence of a proton or sodium gradient. F-type ATPases consist of two structural domains, F(1) containing the extramembraneous catalytic core and F(0) containing the membrane proton channel, linked together by a central stalk and a peripheral stalk. During catalysis, ATP synthesis in the catalytic domain of F(1) is coupled via a rotary mechanism of the central stalk subunits to proton translocation. Functionally, component of the F(0) channel, it forms part of the peripheral stalk, linking F(1) to F(0). This Guillardia theta (Cryptophyte) protein is ATP synthase subunit b, chloroplastic.